The chain runs to 597 residues: Elongation factor 4 (597 aa).

The 183-residue stretch at 2-184 (KHIRNFSIIA…NIVTAIPPPE (183 aa)) folds into the tr-type G domain. GTP contacts are provided by residues 14–19 (DHGKST) and 131–134 (NKID).

This sequence belongs to the TRAFAC class translation factor GTPase superfamily. Classic translation factor GTPase family. LepA subfamily.

It localises to the cell inner membrane. It catalyses the reaction GTP + H2O = GDP + phosphate + H(+). Functionally, required for accurate and efficient protein synthesis under certain stress conditions. May act as a fidelity factor of the translation reaction, by catalyzing a one-codon backward translocation of tRNAs on improperly translocated ribosomes. Back-translocation proceeds from a post-translocation (POST) complex to a pre-translocation (PRE) complex, thus giving elongation factor G a second chance to translocate the tRNAs correctly. Binds to ribosomes in a GTP-dependent manner. This is Elongation factor 4 from Vibrio atlanticus (strain LGP32) (Vibrio splendidus (strain Mel32)).